Here is a 428-residue protein sequence, read N- to C-terminus: MNGGDMNQQQQQQQQQHQQQQQQWLAMQQYQQQWMAMQYPAAAMAMQQQMMYGQQYMPYYQQHQQQQKMQQSPTQIQSSSEDNKTIWIGDLQQWMDESYLHSCFSQAGEVISVKIIRNKQTGQSERYGFVEFNTHAAAEKVLQSYNGTMMPNTEQPFRLNWAGFSTGEKRAETGSDFSIFVGDLASDVTDTMLRDTFASRYPSLKGAKVVVDANTGHSKGYGFVRFGDESERSRAMTEMNGVYCSSRAMRIGVATPKKPSAHEQYSSQAVILSGGYASNGAATHGSQSDGDSSNTTIFVGGLDSEVTDEELRQSFNQFGEVVSVKIPAGKGCGFVQFSDRSSAQEAIQKLSGAIIGKQAVRLSWGRSPANKQMRTDSGSQWNGGYNGRQNYGGYGYGASQNQDSGMYATGAAYGASSNRYGNHQQPVS.

RRM domains lie at K84 to F164, F177 to P256, and T295 to S367.

This sequence belongs to the polyadenylate-binding RBP47 family. As to quaternary structure, interacts with the poly(A) tail of mRNA in nucleus. Constitutively expressed in leaves, roots, and stems.

The protein resides in the nucleus. The protein localises to the cytoplasmic granule. Its function is as follows. Heterogeneous nuclear ribonucleoprotein (hnRNP)-protein binding the poly(A) tail of mRNA and probably involved in some steps of pre-mRNA maturation. The sequence is that of Polyadenylate-binding protein RBP47 (RBP47) from Nicotiana plumbaginifolia (Leadwort-leaved tobacco).